The following is a 478-amino-acid chain: 3-ketoacyl-CoA synthase 3 (478 aa).

The first 25 residues, 1-25 (MDLLVMLLSLLVSYLIFKIWKRIDS), serve as a signal peptide directing secretion. An FAE domain is found at 26-313 (KRDQNCYILD…FMLCLLLKKL (288 aa)). Active-site residues include Cys-168, His-247, His-345, His-349, His-378, and Asn-382.

The protein belongs to the thiolase-like superfamily. Chalcone/stilbene synthases family. Expressed in siliques, leaves, stems and seedlings.

The protein localises to the endoplasmic reticulum. The catalysed reaction is a very-long-chain acyl-CoA + malonyl-CoA + H(+) = a very-long-chain 3-oxoacyl-CoA + CO2 + CoA. The protein operates within lipid metabolism; fatty acid biosynthesis. In Arabidopsis thaliana (Mouse-ear cress), this protein is 3-ketoacyl-CoA synthase 3.